Consider the following 273-residue polypeptide: 4-hydroxy-tetrahydrodipicolinate reductase 1 (273 aa).

NAD(+)-binding positions include 13–18 (GAAGRM) and Glu-39. Arg-40 is a binding site for NADP(+). NAD(+)-binding positions include 103-105 (GTT) and 127-130 (SGNM). The active-site Proton donor/acceptor is the His-161. His-162 serves as a coordination point for (S)-2,3,4,5-tetrahydrodipicolinate. The active-site Proton donor is Lys-165. Position 171 to 172 (171 to 172 (GT)) interacts with (S)-2,3,4,5-tetrahydrodipicolinate.

The protein belongs to the DapB family.

Its subcellular location is the cytoplasm. The enzyme catalyses (S)-2,3,4,5-tetrahydrodipicolinate + NAD(+) + H2O = (2S,4S)-4-hydroxy-2,3,4,5-tetrahydrodipicolinate + NADH + H(+). The catalysed reaction is (S)-2,3,4,5-tetrahydrodipicolinate + NADP(+) + H2O = (2S,4S)-4-hydroxy-2,3,4,5-tetrahydrodipicolinate + NADPH + H(+). It participates in amino-acid biosynthesis; L-lysine biosynthesis via DAP pathway; (S)-tetrahydrodipicolinate from L-aspartate: step 4/4. Its function is as follows. Catalyzes the conversion of 4-hydroxy-tetrahydrodipicolinate (HTPA) to tetrahydrodipicolinate. The polypeptide is 4-hydroxy-tetrahydrodipicolinate reductase 1 (Mesorhizobium japonicum (strain LMG 29417 / CECT 9101 / MAFF 303099) (Mesorhizobium loti (strain MAFF 303099))).